The primary structure comprises 118 residues: Mating-type P-specific polypeptide Pc (118 aa).

The HMG box DNA-binding region spans 29 to 97 (KTTIYKNGFM…VRKQIAKLER (69 aa)).

It is found in the nucleus. In terms of biological role, mating type proteins are sequence specific DNA-binding proteins that act as master switches in yeast differentiation by controlling gene expression in a cell type-specific fashion. Required for conjugation and efficient meiosis. This is Mating-type P-specific polypeptide Pc (matPc) from Schizosaccharomyces kambucha (Fission yeast).